Here is a 367-residue protein sequence, read N- to C-terminus: Pectate lyase 1 (367 aa).

The N-terminal stretch at M1 to S21 is a signal peptide. 2 disulfides stabilise this stretch: C28–C45 and C128–C147. Residue N148 is glycosylated (N-linked (GlcNAc...) asparagine). D170 is a binding site for Ca(2+). N178 carries N-linked (GlcNAc...) asparagine glycosylation. D194 and D198 together coordinate Ca(2+). Residue R250 is part of the active site. N-linked (GlcNAc...) asparagine glycosylation occurs at N293. A disulfide bridge connects residues C306 and C312.

The protein belongs to the polysaccharide lyase 1 family. Amb a subfamily. It depends on Ca(2+) as a cofactor.

It carries out the reaction Eliminative cleavage of (1-&gt;4)-alpha-D-galacturonan to give oligosaccharides with 4-deoxy-alpha-D-galact-4-enuronosyl groups at their non-reducing ends.. Its pathway is glycan metabolism; pectin degradation; 2-dehydro-3-deoxy-D-gluconate from pectin: step 2/5. Functionally, has pectate lyase activity. The chain is Pectate lyase 1 from Hesperocyparis arizonica (Arizona cypress).